The sequence spans 639 residues: CTTNBP2 N-terminal-like protein (639 aa).

A coiled-coil region spans residues 87–285 (MKQCKNMQER…DLEASHQHSS (199 aa)). Residues serine 284 and serine 285 each carry the phosphoserine modification. Disordered stretches follow at residues 387 to 430 (VENG…PCSS), 463 to 490 (RHKF…LSPT), and 511 to 609 (RFTS…AASL). Low complexity-rich tracts occupy residues 407-430 (PSSG…PCSS) and 467-477 (QSQADQDQQAS). Phosphoserine is present on residues serine 481, serine 488, serine 523, serine 527, serine 560, serine 563, and serine 568. Over residues 511–529 (RFTSQQGPIKPVSPNSSPF) the composition is skewed to polar residues. Phosphothreonine occurs at positions 570 and 590. Residues 587–600 (PGLTPSPSATTPLT) show a composition bias toward low complexity. Serine 592 is subject to Phosphoserine.

Interacts with CTTN/cortactin; this interaction may redistribute CTTN to stress fibers. May form homomers. Associates with the core of STRIPAK complexes composed of PP2A catalytic and scaffolding subunits, the striatins (PP2A regulatory subunits), the striatin-associated proteins MOB4, STRIP1 and STRIP2, PDCD10 and members of the STE20 kinases, such as STK24 and STK26.

Its subcellular location is the cell projection. The protein localises to the lamellipodium. The protein resides in the cytoplasm. It localises to the cytoskeleton. It is found in the stress fiber. Its function is as follows. Regulates lamellipodial actin dynamics in a CTTN-dependent manner. Associates with core striatin-interacting phosphatase and kinase (STRIPAK) complex to form CTTNBP2NL-STRIPAK complexes. STRIPAK complexes have critical roles in protein (de)phosphorylation and are regulators of multiple signaling pathways including Hippo, MAPK, nuclear receptor and cytoskeleton remodeling. Different types of STRIPAK complexes are involved in a variety of biological processes such as cell growth, differentiation, apoptosis, metabolism and immune regulation. In Pongo abelii (Sumatran orangutan), this protein is CTTNBP2 N-terminal-like protein (CTTNBP2NL).